The chain runs to 2210 residues: Genome polyprotein (2210 aa).

Residues 1–22 are disordered; sequence MAPVVSRDRHRHKIPKPHQPAP. The 160-residue stretch at 426-585 folds into the SF3 helicase domain; that stretch reads SSKIMELSTI…ADFLRQHPGV (160 aa). 456–463 contacts ATP; that stretch reads GPPGHGKS. Y940 is modified (O-(5'-phospho-RNA)-tyrosine). The 146-residue stretch at 991-1136 folds into the Peptidase C24 domain; the sequence is GNNCEDLPLH…KVFTPITDAP (146 aa). Catalysis depends on for 3CLpro activity residues H1025, D1039, and C1103. In terms of domain architecture, RdRp catalytic spans 1379–1501; it reads DHCLELDYSK…TIPSHLTKSI (123 aa). The segment at 1654–1686 is disordered; the sequence is SDLIREGNMSDNKSTPEQQHESSRAMDAGATGA.

Post-translationally, specific enzymatic cleavages by its own cysteine protease yield mature proteins. The protease cleaves itself from the nascent polyprotein autocatalytically. Precursor p41 can be cleaved by viral 3CLpro into protein p19 and VPg, or cleaved by host protease into protein p23/2 and protein p18. In terms of processing, VPg is uridylylated by the polymerase and is covalently attached to the 5'-end of the polyadenylated genomic and subgenomic RNAs. This uridylylated form acts as a nucleotide-peptide primer for the polymerase.

The protein resides in the virion. The protein localises to the host cytoplasm. It catalyses the reaction a ribonucleoside 5'-triphosphate + H2O = a ribonucleoside 5'-diphosphate + phosphate + H(+). The catalysed reaction is Endopeptidase with a preference for cleavage when the P1 position is occupied by Glu-|-Xaa and the P1' position is occupied by Gly-|-Yaa.. It carries out the reaction RNA(n) + a ribonucleoside 5'-triphosphate = RNA(n+1) + diphosphate. Displays NTPase activity, but no helicase activity. Induces the formation of convoluted membranes derived from the host ER. These remodeled membranes probably form the viral factories that contain the replication complex. Together with NS2 and NS4, initiates the formation of the replication complex. Functionally, viral genome-linked protein is covalently linked to the 5'-end of the positive-strand, negative-strand genomic RNAs and subgenomic RNA. Acts as a genome-linked replication primer. May recruit ribosome to viral RNA thereby promoting viral proteins translation. Interacts with host translation initiation complex to allow the translation of viral proteins. Its function is as follows. Processes the polyprotein. 3CLpro-RdRp is first released by autocleavage, then all other proteins are cleaved. May cleave polyadenylate-binding protein thereby inhibiting cellular translation. In terms of biological role, replicates genomic and antigenomic RNA by recognizing replications specific signals. Also transcribes a subgenomic mRNA by initiating RNA synthesis internally on antigenomic RNA. This sgRNA codes for structural proteins. Catalyzes the covalent attachment VPg with viral RNAs. Capsid protein self assembles to form an icosahedral capsid with a T=3 symmetry, about 35 nm in diameter, and consisting of 180 capsid proteins. A smaller form of capsid with a diameter of 23 nm might be capsid proteins assembled as icosahedron with T=1 symmetry. The capsid encapsulate VP2 proteins and genomic or subgenomic RNA. Attaches virion to target cells by binding histo-blood group antigens, inducing endocytosis of the viral particle. Acidification of the endosome induces conformational change of capsid protein thereby injecting virus genomic RNA into host cytoplasm. The polypeptide is Genome polyprotein (Bos taurus (Bovine)).